A 155-amino-acid polypeptide reads, in one-letter code: SsrA-binding protein (155 aa).

The protein belongs to the SmpB family.

The protein resides in the cytoplasm. Functionally, required for rescue of stalled ribosomes mediated by trans-translation. Binds to transfer-messenger RNA (tmRNA), required for stable association of tmRNA with ribosomes. tmRNA and SmpB together mimic tRNA shape, replacing the anticodon stem-loop with SmpB. tmRNA is encoded by the ssrA gene; the 2 termini fold to resemble tRNA(Ala) and it encodes a 'tag peptide', a short internal open reading frame. During trans-translation Ala-aminoacylated tmRNA acts like a tRNA, entering the A-site of stalled ribosomes, displacing the stalled mRNA. The ribosome then switches to translate the ORF on the tmRNA; the nascent peptide is terminated with the 'tag peptide' encoded by the tmRNA and targeted for degradation. The ribosome is freed to recommence translation, which seems to be the essential function of trans-translation. This chain is SsrA-binding protein, found in Streptococcus equi subsp. zooepidemicus (strain H70).